Reading from the N-terminus, the 424-residue chain is Serine--tRNA ligase (424 aa).

An L-serine-binding site is contributed by 229–231; the sequence is TAE. 260-262 provides a ligand contact to ATP; that stretch reads RRE. Position 283 (glutamate 283) interacts with L-serine. 347 to 350 lines the ATP pocket; it reads EVSS. Serine 383 lines the L-serine pocket.

Belongs to the class-II aminoacyl-tRNA synthetase family. Type-1 seryl-tRNA synthetase subfamily. As to quaternary structure, homodimer. The tRNA molecule binds across the dimer.

It localises to the cytoplasm. It carries out the reaction tRNA(Ser) + L-serine + ATP = L-seryl-tRNA(Ser) + AMP + diphosphate + H(+). The enzyme catalyses tRNA(Sec) + L-serine + ATP = L-seryl-tRNA(Sec) + AMP + diphosphate + H(+). It participates in aminoacyl-tRNA biosynthesis; selenocysteinyl-tRNA(Sec) biosynthesis; L-seryl-tRNA(Sec) from L-serine and tRNA(Sec): step 1/1. Its function is as follows. Catalyzes the attachment of serine to tRNA(Ser). Is also able to aminoacylate tRNA(Sec) with serine, to form the misacylated tRNA L-seryl-tRNA(Sec), which will be further converted into selenocysteinyl-tRNA(Sec). The chain is Serine--tRNA ligase from Roseiflexus sp. (strain RS-1).